Consider the following 216-residue polypeptide: MRTHPDFPNLFILDHPLIQHKLSHMRDRQRSTMGFRQLLKEIALLMGYEITRDLPLTTEAIETPLCTMDAPVIEGKKLAIVPILRAGLIMAEGLLELVPAAREGHIGLYRDHDTKMPVEYLVKLPDPAGRRFILVDPMLATGNSAVHAVDVLNRNGVLDAQIRFMALVAAPEGVRTFHAAHPTVPVFTAGLDSHLNPNAYIVPGLGDAGDRLFGTK.

5-phospho-alpha-D-ribose 1-diphosphate contacts are provided by residues Arg85, Arg110, and 136 to 144; that span reads DPMLATGNS. Uracil is bound by residues Ile201 and 206–208; that span reads GDA. Asp207 contacts 5-phospho-alpha-D-ribose 1-diphosphate.

This sequence belongs to the UPRTase family. Requires Mg(2+) as cofactor.

The enzyme catalyses UMP + diphosphate = 5-phospho-alpha-D-ribose 1-diphosphate + uracil. It participates in pyrimidine metabolism; UMP biosynthesis via salvage pathway; UMP from uracil: step 1/1. Allosterically activated by GTP. Its function is as follows. Catalyzes the conversion of uracil and 5-phospho-alpha-D-ribose 1-diphosphate (PRPP) to UMP and diphosphate. The polypeptide is Uracil phosphoribosyltransferase (Rhodospirillum centenum (strain ATCC 51521 / SW)).